Reading from the N-terminus, the 573-residue chain is Methionine--tRNA ligase (573 aa).

The 'HIGH' region signature appears at 10–20 (PYVNSVPHLGN). Zn(2+) is bound by residues Cys-143, Cys-146, Cys-156, and Cys-159. The short motif at 333 to 337 (KFSKS) is the 'KMSKS' region element. Lys-336 is a binding site for ATP.

The protein belongs to the class-I aminoacyl-tRNA synthetase family. MetG type 1 subfamily. It depends on Zn(2+) as a cofactor.

Its subcellular location is the cytoplasm. The enzyme catalyses tRNA(Met) + L-methionine + ATP = L-methionyl-tRNA(Met) + AMP + diphosphate. Is required not only for elongation of protein synthesis but also for the initiation of all mRNA translation through initiator tRNA(fMet) aminoacylation. The protein is Methionine--tRNA ligase of Saccharolobus solfataricus (strain ATCC 35092 / DSM 1617 / JCM 11322 / P2) (Sulfolobus solfataricus).